Here is a 171-residue protein sequence, read N- to C-terminus: Sec-independent protein translocase protein TatB (171 aa).

A helical transmembrane segment spans residues 1–21; that stretch reads MFDIGFSELLLVFIIGLVVLG. Residues 89–171 are disordered; that stretch reads AESMKRSYVA…APSPSSSDKP (83 aa). The span at 100 to 123 shows a compositional bias: basic and acidic residues; that stretch reads DPEKASDEAHTIHNPVVKDNETAH. Residues 130 to 139 are compositionally biased toward polar residues; the sequence is AAQTQASSPE.

This sequence belongs to the TatB family. As to quaternary structure, the Tat system comprises two distinct complexes: a TatABC complex, containing multiple copies of TatA, TatB and TatC subunits, and a separate TatA complex, containing only TatA subunits. Substrates initially bind to the TatABC complex, which probably triggers association of the separate TatA complex to form the active translocon.

The protein localises to the cell inner membrane. Part of the twin-arginine translocation (Tat) system that transports large folded proteins containing a characteristic twin-arginine motif in their signal peptide across membranes. Together with TatC, TatB is part of a receptor directly interacting with Tat signal peptides. TatB may form an oligomeric binding site that transiently accommodates folded Tat precursor proteins before their translocation. This Escherichia coli O1:K1 / APEC protein is Sec-independent protein translocase protein TatB.